The primary structure comprises 123 residues: Large ribosomal subunit protein bL17 (123 aa).

The protein belongs to the bacterial ribosomal protein bL17 family. Part of the 50S ribosomal subunit. Contacts protein L32.

The sequence is that of Large ribosomal subunit protein bL17 from Dichelobacter nodosus (strain VCS1703A).